Consider the following 679-residue polypeptide: Enzymatic polyprotein (679 aa).

The protease stretch occupies residues 40–130; the sequence is LHCFVDTGAS…LYEPFIQFTD (91 aa). D45 is a catalytic residue. Residues 272–452 form the Reverse transcriptase domain; that stretch reads LKVIKPSKSP…KKINFLGLEI (181 aa).

It belongs to the caulimoviridae enzymatic polyprotein family.

It carries out the reaction DNA(n) + a 2'-deoxyribonucleoside 5'-triphosphate = DNA(n+1) + diphosphate. Encodes for at least two polypeptides: protease (PR) and reverse transcriptase (RT). The protease processes the polyprotein in cis. Reverse transcriptase is multifunctional enzyme that converts the viral RNA genome into dsDNA in viral cytoplasmic capsids. This enzyme displays a DNA polymerase activity that can copy either DNA or RNA templates, and a ribonuclease H (RNase H) activity that cleaves the RNA strand of RNA-DNA heteroduplexes in a partially processive 3'- to 5'-endonucleasic mode. Neo-synthesized pregenomic RNA (pgRNA) are encapsidated, and reverse-transcribed inside the nucleocapsid. Partial (+)DNA is synthesized from the (-)DNA template and generates the relaxed circular DNA (RC-DNA) genome. After budding and infection, the RC-DNA migrates in the nucleus, and is converted into a plasmid-like covalently closed circular DNA (cccDNA). The chain is Enzymatic polyprotein from Cauliflower mosaic virus (strain BBC) (CaMV).